The primary structure comprises 24 residues: Heat shock 70 kDa protein 4L (24 aa).

At Thr19 the chain carries Phosphothreonine.

Belongs to the heat shock protein 70 family. In terms of assembly, homodimer. In the testis, forms a complex with p53 at 32.5 degrees Celsius which is scrotal temperature but not at 37 or 42 degrees Celsius. In terms of tissue distribution, expressed at high levels in testis and at much lower levels in brain. In testis, expressed mainly in germ cells. Widespread in brain with highest expression in cerebellum and medulla oblongata. Also expressed in renal medulla of water-restricted animals.

The protein localises to the cytoplasm. Its subcellular location is the nucleus. Possesses chaperone activity in vitro where it inhibits aggregation of citrate synthase. This chain is Heat shock 70 kDa protein 4L (Hspa4l), found in Rattus norvegicus (Rat).